The following is a 147-amino-acid chain: Hemoglobin subunit gamma (147 aa).

The 145-residue stretch at 3–147 folds into the Globin domain; sequence NFTAEDKAAI…VASALASRYH (145 aa). Heme b-binding residues include His-64 and His-93.

Belongs to the globin family. Heterotetramer of two alpha chains and two gamma chains in fetal hemoglobin (Hb F). Red blood cells.

In terms of biological role, gamma chains make up the fetal hemoglobin F, in combination with alpha chains. This chain is Hemoglobin subunit gamma (HBG1), found in Callithrix jacchus (White-tufted-ear marmoset).